The following is a 905-amino-acid chain: Catenin alpha-2 (905 aa).

Phosphothreonine is present on Thr-632. Phosphoserine occurs at positions 640, 651, and 853. Basic and acidic residues predominate over residues 869–879 (VKREKPEEFQT). The tract at residues 869–891 (VKREKPEEFQTRVRRGSQKKHIS) is disordered. Positions 880–890 (RVRRGSQKKHI) are enriched in basic residues. Position 891 is a phosphoserine (Ser-891).

The protein belongs to the vinculin/alpha-catenin family. In terms of assembly, interacts with CDH1 and CDH2. Interacts with ZNF639; recruits CTNNA2 to the nucleus. Interacts with F-actin.

It is found in the cell membrane. It localises to the cytoplasm. Its subcellular location is the cytoskeleton. The protein localises to the cell junction. The protein resides in the adherens junction. It is found in the cell projection. It localises to the axon. Its subcellular location is the nucleus. In terms of biological role, may function as a linker between cadherin adhesion receptors and the cytoskeleton to regulate cell-cell adhesion and differentiation in the nervous system. Required for proper regulation of cortical neuronal migration and neurite growth. It acts as a negative regulator of Arp2/3 complex activity and Arp2/3-mediated actin polymerization. It thereby suppresses excessive actin branching which would impair neurite growth and stability. Regulates morphological plasticity of synapses and cerebellar and hippocampal lamination during development. Functions in the control of startle modulation. This chain is Catenin alpha-2 (CTNNA2), found in Pongo abelii (Sumatran orangutan).